Consider the following 119-residue polypeptide: Fluoride-specific ion channel FluC 2 (119 aa).

The helical transmembrane segment at 46–66 (FALGLLTFAGVTGDAALLVGV) threads the bilayer. 2 residues coordinate Na(+): Gly70 and Thr73. The helical transmembrane segment at 96-116 (LNAVGNLACALVGIGLAWGIV) threads the bilayer.

This sequence belongs to the fluoride channel Fluc/FEX (TC 1.A.43) family.

It localises to the cell membrane. It catalyses the reaction fluoride(in) = fluoride(out). Na(+) is not transported, but it plays an essential structural role and its presence is essential for fluoride channel function. Its function is as follows. Fluoride-specific ion channel. Important for reducing fluoride concentration in the cell, thus reducing its toxicity. The sequence is that of Fluoride-specific ion channel FluC 2 from Haloarcula marismortui (strain ATCC 43049 / DSM 3752 / JCM 8966 / VKM B-1809) (Halobacterium marismortui).